Reading from the N-terminus, the 503-residue chain is Ribose import ATP-binding protein RbsA 1 (503 aa).

2 ABC transporter domains span residues 5–241 (IALE…VGRA) and 253–495 (IGQP…AGIE). An ATP-binding site is contributed by 37–44 (GENGAGKS).

Belongs to the ABC transporter superfamily. Ribose importer (TC 3.A.1.2.1) family. The complex is composed of an ATP-binding protein (RbsA), two transmembrane proteins (RbsC) and a solute-binding protein (RbsB).

Its subcellular location is the cell inner membrane. It carries out the reaction D-ribose(out) + ATP + H2O = D-ribose(in) + ADP + phosphate + H(+). Its function is as follows. Part of the ABC transporter complex RbsABC involved in ribose import. Responsible for energy coupling to the transport system. The sequence is that of Ribose import ATP-binding protein RbsA 1 from Rhizobium meliloti (strain 1021) (Ensifer meliloti).